The following is a 165-amino-acid chain: Ribosome maturation factor RimM (165 aa).

Residues 90 to 161 (PDTYYVSDLK…KIIIKPVGEW (72 aa)) enclose the PRC barrel domain.

This sequence belongs to the RimM family. As to quaternary structure, binds ribosomal protein uS19.

The protein resides in the cytoplasm. Its function is as follows. An accessory protein needed during the final step in the assembly of 30S ribosomal subunit, possibly for assembly of the head region. Essential for efficient processing of 16S rRNA. May be needed both before and after RbfA during the maturation of 16S rRNA. It has affinity for free ribosomal 30S subunits but not for 70S ribosomes. This Clostridium beijerinckii (strain ATCC 51743 / NCIMB 8052) (Clostridium acetobutylicum) protein is Ribosome maturation factor RimM.